The chain runs to 182 residues: ATP-dependent protease subunit HslV (182 aa).

The active site involves Thr6. Na(+)-binding residues include Ala164, Cys167, and Thr170.

This sequence belongs to the peptidase T1B family. HslV subfamily. A double ring-shaped homohexamer of HslV is capped on each side by a ring-shaped HslU homohexamer. The assembly of the HslU/HslV complex is dependent on binding of ATP.

The protein localises to the cytoplasm. The catalysed reaction is ATP-dependent cleavage of peptide bonds with broad specificity.. Allosterically activated by HslU binding. Functionally, protease subunit of a proteasome-like degradation complex believed to be a general protein degrading machinery. This is ATP-dependent protease subunit HslV from Borreliella afzelii (strain PKo) (Borrelia afzelii).